Here is a 374-residue protein sequence, read N- to C-terminus: O-methyltransferase 16 (374 aa).

S-adenosyl-L-homocysteine-binding residues include Ser-195, Gly-219, Asp-242, Asp-262, and Lys-276. S-adenosyl-L-methionine is bound at residue Asp-242. His-280 functions as the Proton acceptor in the catalytic mechanism.

This sequence belongs to the class I-like SAM-binding methyltransferase superfamily. Cation-independent O-methyltransferase family. Homodimer. As to expression, expressed mainly in vasculature and cortex tissues at low levels.

The catalysed reaction is dopamine + S-adenosyl-L-methionine = 4-methoxytyramine + S-adenosyl-L-homocysteine + H(+). Its pathway is aromatic compound metabolism. It participates in alkaloid biosynthesis. Functionally, O-methyltransferase participating in the biosynthesis of natural products derived from phenylethylamine, including mescaline, a natural hallucinogen potentially used in psychotherapeutic treatments. Catalyzes the O-methylation of dopamine to produce 4-methoxytyramine. The polypeptide is O-methyltransferase 16 (Lophophora williamsii (Peyote)).